The chain runs to 227 residues: Protein CAP22 (227 aa).

2 N-linked (GlcNAc...) asparagine glycosylation sites follow: asparagine 55 and asparagine 72. The segment at 143-162 (TTIGGGATPAPTSERSRTSD) is disordered.

It localises to the secreted. It is found in the cell wall. In Colletotrichum gloeosporioides (Anthracnose fungus), this protein is Protein CAP22 (CAP22).